Consider the following 288-residue polypeptide: Diaminopimelate epimerase (288 aa).

Substrate contacts are provided by Asn17, Gln47, and Asn67. The active-site Proton donor is Cys76. Substrate-binding positions include 77–78, Asn164, Asn197, and 215–216; these read GN and ER. Catalysis depends on Cys224, which acts as the Proton acceptor. Substrate is bound at residue 225 to 226; that stretch reads GS.

The protein belongs to the diaminopimelate epimerase family. Homodimer.

The protein localises to the cytoplasm. The catalysed reaction is (2S,6S)-2,6-diaminopimelate = meso-2,6-diaminopimelate. It functions in the pathway amino-acid biosynthesis; L-lysine biosynthesis via DAP pathway; DL-2,6-diaminopimelate from LL-2,6-diaminopimelate: step 1/1. Catalyzes the stereoinversion of LL-2,6-diaminopimelate (L,L-DAP) to meso-diaminopimelate (meso-DAP), a precursor of L-lysine and an essential component of the bacterial peptidoglycan. The polypeptide is Diaminopimelate epimerase (Rhodopseudomonas palustris (strain BisA53)).